The chain runs to 445 residues: UPF0210 protein SMU_73 (445 aa).

The protein belongs to the UPF0210 family. Homodimer.

This chain is UPF0210 protein SMU_73, found in Streptococcus mutans serotype c (strain ATCC 700610 / UA159).